Consider the following 467-residue polypeptide: Pup--protein ligase (467 aa).

Mg(2+) is bound at residue glutamate 12. Position 56 (arginine 56) interacts with ATP. Residue tyrosine 58 coordinates Mg(2+). Aspartate 60 serves as the catalytic Proton acceptor. Glutamate 66 contributes to the Mg(2+) binding site. ATP contacts are provided by threonine 69 and tryptophan 431.

This sequence belongs to the Pup ligase/Pup deamidase family. Pup-conjugating enzyme subfamily.

It carries out the reaction ATP + [prokaryotic ubiquitin-like protein]-L-glutamate + [protein]-L-lysine = ADP + phosphate + N(6)-([prokaryotic ubiquitin-like protein]-gamma-L-glutamyl)-[protein]-L-lysine.. The protein operates within protein degradation; proteasomal Pup-dependent pathway. It participates in protein modification; protein pupylation. Catalyzes the covalent attachment of the prokaryotic ubiquitin-like protein modifier Pup to the proteasomal substrate proteins, thereby targeting them for proteasomal degradation. This tagging system is termed pupylation. The ligation reaction involves the side-chain carboxylate of the C-terminal glutamate of Pup and the side-chain amino group of a substrate lysine. In Corynebacterium jeikeium (strain K411), this protein is Pup--protein ligase.